We begin with the raw amino-acid sequence, 140 residues long: Probable transport accessory protein MmpS4 (140 aa).

The chain crosses the membrane as a helical span at residues 2–22 (LMRTWIPLVILVVVIVGGFTV).

The protein belongs to the MmpS family.

It localises to the cell membrane. The chain is Probable transport accessory protein MmpS4 (mmpS4) from Mycobacterium bovis (strain ATCC BAA-935 / AF2122/97).